Reading from the N-terminus, the 269-residue chain is UPF0524 protein C3orf70 homolog A (269 aa).

2 disordered regions span residues 139–203 and 215–249; these read VQRP…DSGI and DEDSCVDDDDEEEEDDELSTDGNSSPGSFWDQDEC. Residues 141-150 are compositionally biased toward pro residues; the sequence is RPPPPTPNPT. A compositionally biased stretch (low complexity) spans 151-164; that stretch reads HQPQTAAPQPVPQR. Residues 179–191 are compositionally biased toward basic and acidic residues; sequence QAKEKISAPKMDH. Residues 215 to 233 are compositionally biased toward acidic residues; the sequence is DEDSCVDDDDEEEEDDELS.

It belongs to the UPF0524 family.

Plays a role in neuronal and neurobehavioral development. Required for normal expression of neuronal markers elavl3 and eno2 and neurobehaviors related to circadian rhythm and changes in light-dark conditions. The polypeptide is UPF0524 protein C3orf70 homolog A (Danio rerio (Zebrafish)).